Here is a 257-residue protein sequence, read N- to C-terminus: TLC domain-containing protein 3A (257 aa).

7 helical membrane-spanning segments follow: residues 1–21 (MLLT…LCTW), 42–62 (LVSS…IRSC), 77–97 (VWFL…CEWC), 113–135 (FLSR…VPVA), 142–162 (LGDF…FVSL), 181–201 (GILT…FMYW), and 220–240 (FYCN…FCLL). The TLC domain occupies 33-249 (TDCVMISTRL…LCRKAVRLFD (217 aa)).

Interacts with GGT7 isoform 3 and SLC3A2. In terms of tissue distribution, highly expressed in pancreas. Detected at intermediate levels in heart, placenta and kidney, and at low levels in brain, liver and skeletal muscle. Not detected in normal lung.

The protein localises to the cell membrane. This Homo sapiens (Human) protein is TLC domain-containing protein 3A.